The chain runs to 578 residues: Alpha-(1,6)-fucosyltransferase (578 aa).

Over 1 to 9 (MRPWTGSWR) the chain is Cytoplasmic. Residues 10–30 (WIMLILFAWGTLLFYIGGHLV) form a helical; Signal-anchor for type II membrane protein membrane-spanning segment. The Lumenal segment spans residues 31–578 (RDNENPDHSS…KYPTYQEAEK (548 aa)). Intrachain disulfides connect cysteine 207–cysteine 269, cysteine 215–cysteine 233, and cysteine 221–cysteine 225. The region spanning 209 to 496 (KAKKLVCNIN…PDASAHFHSL (288 aa)) is the GT23 domain. Positions 302 to 308 (PRPPYLP) match the SH3-binding motif. The tract at residues 368–369 (RR) is important for donor substrate binding. The cysteines at positions 468 and 475 are disulfide-linked. An SH3 domain is found at 505–566 (QNAHNQLAIY…PSYKVKEKIE (62 aa)).

Belongs to the glycosyltransferase 23 family.

The protein resides in the golgi apparatus. Its subcellular location is the golgi stack membrane. It carries out the reaction N(4)-{beta-D-GlcNAc-(1-&gt;2)-alpha-D-Man-(1-&gt;3)-[beta-D-GlcNAc-(1-&gt;2)-alpha-D-Man-(1-&gt;6)]-beta-D-Man-(1-&gt;4)-beta-D-GlcNAc-(1-&gt;4)-beta-D-GlcNAc}-L-asparaginyl-[protein] + GDP-beta-L-fucose = an N(4)-{beta-D-GlcNAc-(1-&gt;2)-alpha-D-Man-(1-&gt;3)-[beta-D-GlcNAc-(1-&gt;2)-alpha-D-Man-(1-&gt;6)]-beta-D-Man-(1-&gt;4)-beta-D-GlcNAc-(1-&gt;4)-[alpha-L-Fuc-(1-&gt;6)]-beta-D-GlcNAc}-L-asparaginyl-[protein] + GDP + H(+). Its pathway is protein modification; protein glycosylation. Functionally, catalyzes the addition of fucose in alpha 1-6 linkage to the first GlcNAc residue, next to the peptide chains in N-glycans. The polypeptide is Alpha-(1,6)-fucosyltransferase (fut8) (Xenopus tropicalis (Western clawed frog)).